Here is a 350-residue protein sequence, read N- to C-terminus: MLTDPGLRDELDRVAAAVGVRVVHLGGRHPVSRKTWSAAAAVVLDHAAADRCGRLALPRRTHVSVLTGTEAATATWAAAITVGAQHVLRMPEQEGELVRELAEAAESARDDGICGAVVAVIGGRGGAGASLFAVALAQAAADALLVDLDPWAGGIDLLVGGETAPGLRWPDLALQGGRLNWSAVRAALPRPRGISVLSGTRRGYELDAGPVDAVIDAGRRGGVTVVCDLPRRLTDATQAALDAADLVVLVSPCDVRACAAAATMAPVLTAINPNLGLVVRGPSPGGLRAAEVADVAGVPLLASMRAQPRLAEQLEHGGLRLRRRSVLASAARRVLGVLPRAGSGRHGRAA.

May play a role in septum formation. This is an uncharacterized protein from Mycobacterium tuberculosis (strain CDC 1551 / Oshkosh).